The sequence spans 97 residues: Large ribosomal subunit protein uL23 (97 aa).

It belongs to the universal ribosomal protein uL23 family. In terms of assembly, part of the 50S ribosomal subunit. Contacts protein L29, and trigger factor when it is bound to the ribosome.

Functionally, one of the early assembly proteins it binds 23S rRNA. One of the proteins that surrounds the polypeptide exit tunnel on the outside of the ribosome. Forms the main docking site for trigger factor binding to the ribosome. The sequence is that of Large ribosomal subunit protein uL23 from Lactococcus lactis subsp. cremoris (strain SK11).